Reading from the N-terminus, the 587-residue chain is Glutamine--tRNA ligase (587 aa).

A 'HIGH' region motif is present at residues 58-68 (PEPNGYLHIGH). ATP is bound by residues 59 to 61 (EPN) and 65 to 71 (HIGHAKS). The L-glutamine site is built by Asp-91 and Tyr-240. Residues Thr-259 and 294-295 (RL) each bind ATP. Positions 301-305 (VTSKR) match the 'KMSKS' region motif.

This sequence belongs to the class-I aminoacyl-tRNA synthetase family. Monomer.

It is found in the cytoplasm. The enzyme catalyses tRNA(Gln) + L-glutamine + ATP = L-glutaminyl-tRNA(Gln) + AMP + diphosphate. The chain is Glutamine--tRNA ligase from Bordetella bronchiseptica (strain ATCC BAA-588 / NCTC 13252 / RB50) (Alcaligenes bronchisepticus).